The chain runs to 320 residues: Malate dehydrogenase (320 aa).

NAD(+)-binding positions include 10-15 and Asp-34; that span reads GSGMIG. 2 residues coordinate substrate: Arg-83 and Arg-89. NAD(+)-binding positions include Asn-96 and 119–121; that span reads ITN. Residues Asn-121 and Arg-152 each contribute to the substrate site. His-176 (proton acceptor) is an active-site residue.

Belongs to the LDH/MDH superfamily. MDH type 3 family.

The enzyme catalyses (S)-malate + NAD(+) = oxaloacetate + NADH + H(+). In terms of biological role, catalyzes the reversible oxidation of malate to oxaloacetate. The sequence is that of Malate dehydrogenase from Brucella suis (strain ATCC 23445 / NCTC 10510).